A 505-amino-acid chain; its full sequence is Cytochrome P450 4Z1 (505 aa).

At 1–9 the chain is on the cytoplasmic side; it reads MEPSWLQEL. The chain crosses the membrane as a helical; Signal-anchor for type II membrane protein span at residues 10 to 30; sequence MAHPFLLLILLCMSLLLFQVI. The Lumenal portion of the chain corresponds to 31–505; it reads RLYQRRRWMI…GIHVFAKKVC (475 aa). C452 is a heme binding site.

Belongs to the cytochrome P450 family. Heme serves as cofactor. As to expression, preferentially detected in breast carcinoma tissue and mammary gland, whereas only marginal expression is found in all other tested tissues.

The protein resides in the endoplasmic reticulum membrane. Its subcellular location is the microsome membrane. It catalyses the reaction an organic molecule + reduced [NADPH--hemoprotein reductase] + O2 = an alcohol + oxidized [NADPH--hemoprotein reductase] + H2O + H(+). It carries out the reaction dodecanoate + reduced [NADPH--hemoprotein reductase] + O2 = 7-hydroxydodecanoate + oxidized [NADPH--hemoprotein reductase] + H2O + H(+). The enzyme catalyses dodecanoate + reduced [NADPH--hemoprotein reductase] + O2 = 8-hydroxydodecanoate + oxidized [NADPH--hemoprotein reductase] + H2O + H(+). The catalysed reaction is dodecanoate + reduced [NADPH--hemoprotein reductase] + O2 = 9-hydroxydodecanoate + oxidized [NADPH--hemoprotein reductase] + H2O + H(+). It catalyses the reaction dodecanoate + reduced [NADPH--hemoprotein reductase] + O2 = 10-hydroxydodecanoate + oxidized [NADPH--hemoprotein reductase] + H2O + H(+). It carries out the reaction dodecanoate + reduced [NADPH--hemoprotein reductase] + O2 = 11-hydroxydodecanoate + oxidized [NADPH--hemoprotein reductase] + H2O + H(+). The enzyme catalyses tetradecanoate + reduced [NADPH--hemoprotein reductase] + O2 = 9-hydroxytetradecanoate + oxidized [NADPH--hemoprotein reductase] + H2O + H(+). The catalysed reaction is tetradecanoate + reduced [NADPH--hemoprotein reductase] + O2 = 10-hydroxytetradecanoate + oxidized [NADPH--hemoprotein reductase] + H2O + H(+). It catalyses the reaction tetradecanoate + reduced [NADPH--hemoprotein reductase] + O2 = 11-hydroxytetradecanoate + oxidized [NADPH--hemoprotein reductase] + H2O + H(+). It carries out the reaction tetradecanoate + reduced [NADPH--hemoprotein reductase] + O2 = 12-hydroxytetradecanoate + oxidized [NADPH--hemoprotein reductase] + H2O + H(+). The enzyme catalyses (5Z,8Z,11Z,14Z)-eicosatetraenoate + reduced [NADPH--hemoprotein reductase] + O2 = (14S,15R)-epoxy-(5Z,8Z,11Z)-eicosatrienoate + oxidized [NADPH--hemoprotein reductase] + H2O + H(+). Its function is as follows. A cytochrome P450 monooxygenase that catalyzes the in-chain oxidation of fatty acids. Catalyzes the hydroxylation of carbon-hydrogen bonds. Hydroxylates lauric and myristic acids predominantly at the omega-4 and omega-2 positions, respectively. Catalyzes the epoxidation of double bonds of polyunsaturated fatty acids (PUFA). Displays an absolute stereoselectivity in the epoxidation of arachidonic acid producing the 14(S),15(R)-epoxyeicosatrienoic acid (EET) enantiomer. Mechanistically, uses molecular oxygen inserting one oxygen atom into a substrate, and reducing the second into a water molecule, with two electrons provided by NADPH via cytochrome P450 reductase (CPR; NADPH-ferrihemoprotein reductase). This Homo sapiens (Human) protein is Cytochrome P450 4Z1.